The chain runs to 1031 residues: Formin-binding protein 4 (1031 aa).

Disordered stretches follow at residues 1–102 (MMGK…TTRP), 116–143 (AYADSDDDESDVSEKTAQSKEANGNQAT), and 166–205 (APVVASAPPPTPPRPEPKEAATPALSPTASNGSDTAQTPG). Position 19 is a phosphoserine (S19). Composition is skewed to low complexity over residues 41-73 (DSTAAATSQSAPAAATAAAATSPAVPASAAPED) and 83-92 (VVEVPNVVQN). Phosphoserine is present on residues S120, S125, and S128. The segment covering 134–143 (SKEANGNQAT) has biased composition (polar residues). T176 carries the post-translational modification Phosphothreonine. Positions 190–203 (LSPTASNGSDTAQT) are enriched in polar residues. Residues 218 to 252 (EIEMGDWQEVWDENTGCYYYWNTQTNEVTWELPQY) form the WW 1 domain. The residue at position 294 (K294) is an N6-acetyllysine. A Glycyl lysine isopeptide (Lys-Gly) (interchain with G-Cter in SUMO1) cross-link involves residue K305. Residue K339 forms a Glycyl lysine isopeptide (Lys-Gly) (interchain with G-Cter in SUMO2) linkage. Residue K352 forms a Glycyl lysine isopeptide (Lys-Gly) (interchain with G-Cter in SUMO1); alternate linkage. A Glycyl lysine isopeptide (Lys-Gly) (interchain with G-Cter in SUMO2); alternate cross-link involves residue K352. The segment at 355-518 (DPVSETKETS…KETEVEESSE (164 aa)) is disordered. Residues 400–414 (ESEEEEEEEEQDTLE) are compositionally biased toward acidic residues. Positions 418–430 (ALERKKAELRALE) are enriched in basic and acidic residues. Phosphoserine occurs at positions 435, 440, 443, 446, and 450. Polar residues predominate over residues 436-450 (VSGSSPRSDISQPAS). A compositionally biased stretch (basic residues) spans 457-466 (IMSKRGKWKM). The span at 469-482 (RATSPESTSRSSSK) shows a compositional bias: low complexity. Phosphoserine occurs at positions 472, 507, and 516. Basic and acidic residues predominate over residues 499-518 (DSEKIDEISDKETEVEESSE). K527 participates in a covalent cross-link: Glycyl lysine isopeptide (Lys-Gly) (interchain with G-Cter in SUMO1); alternate. Residue K527 forms a Glycyl lysine isopeptide (Lys-Gly) (interchain with G-Cter in SUMO2); alternate linkage. Positions 603 to 637 (NATPKGWSCHWDRDHRRYFYVNEQSGESQWEFPDG) constitute a WW 2 domain. Disordered stretches follow at residues 629–681 (ESQW…SLCK), 712–813 (PLPL…VQRS), and 900–994 (PAQA…RIEE). Positions 643–663 (SQTKEVRDESLPKLTVKDKTC) are enriched in basic and acidic residues. The segment covering 664-677 (TDPNSTESSENPTG) has biased composition (polar residues). A compositionally biased stretch (pro residues) spans 712-741 (PLPLEMPPPPPPPPESPPPPPPPPPPPPPL). Over residues 742 to 757 (EDGEIQEVEMEDEGSE) the composition is skewed to acidic residues. The span at 771 to 794 (KPSTQTTAVTSQSLVDSTASSPPS) shows a compositional bias: polar residues. The segment covering 913 to 939 (VEPPPPPPPPPTPTPPPPPPAPKVPPP) has biased composition (pro residues). The segment covering 943–955 (RKGKKDKAKKSKT) has biased composition (basic residues). Positions 971 to 984 (LDEEDNSSSSEEDR) are enriched in acidic residues. Phosphoserine is present on residues S977, S978, and S979. Residues 985–994 (ESTAQKRIEE) are compositionally biased toward basic and acidic residues.

In terms of assembly, binds FMN1. Interacts with the Arg/Gly-rich-flanked Pro-rich regions of KHDRBS1/SAM68. Arginine methylation in these regions has no effect on this binding. In terms of tissue distribution, ubiquitous. Highest levels in spleen and thymus.

The polypeptide is Formin-binding protein 4 (Fnbp4) (Mus musculus (Mouse)).